The primary structure comprises 210 residues: Pyridoxine/pyridoxamine 5'-phosphate oxidase (210 aa).

Substrate-binding positions include arginine 7–tyrosine 10 and lysine 65. FMN is bound by residues arginine 60 to lysine 65, tyrosine 75 to threonine 76, arginine 81, lysine 82, and glutamine 104. Substrate-binding residues include tyrosine 122, arginine 126, and serine 130. Residues glutamine 139–serine 140 and tryptophan 182 each bind FMN. Substrate is bound at residue arginine 188–histidine 190. Position 192 (arginine 192) interacts with FMN.

Belongs to the pyridoxamine 5'-phosphate oxidase family. Homodimer. It depends on FMN as a cofactor.

It carries out the reaction pyridoxamine 5'-phosphate + O2 + H2O = pyridoxal 5'-phosphate + H2O2 + NH4(+). The catalysed reaction is pyridoxine 5'-phosphate + O2 = pyridoxal 5'-phosphate + H2O2. It functions in the pathway cofactor metabolism; pyridoxal 5'-phosphate salvage; pyridoxal 5'-phosphate from pyridoxamine 5'-phosphate: step 1/1. The protein operates within cofactor metabolism; pyridoxal 5'-phosphate salvage; pyridoxal 5'-phosphate from pyridoxine 5'-phosphate: step 1/1. Catalyzes the oxidation of either pyridoxine 5'-phosphate (PNP) or pyridoxamine 5'-phosphate (PMP) into pyridoxal 5'-phosphate (PLP). The chain is Pyridoxine/pyridoxamine 5'-phosphate oxidase from Bordetella petrii (strain ATCC BAA-461 / DSM 12804 / CCUG 43448).